A 268-amino-acid polypeptide reads, in one-letter code: Undecaprenyl-diphosphatase (268 aa).

The next 7 helical transmembrane spans lie at 5 to 25 (SIIS…IPVS), 43 to 63 (GNTF…LVYF), 84 to 104 (LSVL…HGFI), 109 to 129 (FETP…LYVI), 184 to 204 (AAEF…ALDL), 213 to 233 (IDDI…GIFV), and 248 to 268 (PFAI…WLLG).

This sequence belongs to the UppP family.

Its subcellular location is the cell inner membrane. It catalyses the reaction di-trans,octa-cis-undecaprenyl diphosphate + H2O = di-trans,octa-cis-undecaprenyl phosphate + phosphate + H(+). In terms of biological role, catalyzes the dephosphorylation of undecaprenyl diphosphate (UPP). Confers resistance to bacitracin. In Sinorhizobium medicae (strain WSM419) (Ensifer medicae), this protein is Undecaprenyl-diphosphatase.